A 227-amino-acid polypeptide reads, in one-letter code: Translation initiation factor 6 (227 aa).

The protein belongs to the eIF-6 family.

Its function is as follows. Binds to the 50S ribosomal subunit and prevents its association with the 30S ribosomal subunit to form the 70S initiation complex. This Methanococcus maripaludis (strain C5 / ATCC BAA-1333) protein is Translation initiation factor 6.